The primary structure comprises 498 residues: ATP synthase subunit beta, chloroplastic (498 aa).

172-179 lines the ATP pocket; the sequence is GGAGVGKT.

This sequence belongs to the ATPase alpha/beta chains family. In terms of assembly, F-type ATPases have 2 components, CF(1) - the catalytic core - and CF(0) - the membrane proton channel. CF(1) has five subunits: alpha(3), beta(3), gamma(1), delta(1), epsilon(1). CF(0) has four main subunits: a(1), b(1), b'(1) and c(9-12).

It localises to the plastid. The protein resides in the chloroplast thylakoid membrane. It carries out the reaction ATP + H2O + 4 H(+)(in) = ADP + phosphate + 5 H(+)(out). Functionally, produces ATP from ADP in the presence of a proton gradient across the membrane. The catalytic sites are hosted primarily by the beta subunits. The chain is ATP synthase subunit beta, chloroplastic from Phaseolus vulgaris (Kidney bean).